Consider the following 420-residue polypeptide: MSNALIEELQWRGLIYQQTDESSIEELLNKEQISLYCGADPTADSLHIGHLLPFMTLRRFQEHGHRPIVLIGGGTGMIGDPSGKSEERILQTEDQVEANVEGISAQMHKLFEFGTDKGAILVNNKDWLSQISLISFLRDYGKHVGVNYMLGKDSIQSRLENGISYTEFTYTILQAIDFGHLNRELNCKLQVGGSDQWGNITSGIELMRRMYGQTEAYGLTIPLVTKSDGKKFGKSESGAVWLDADKTSPYEFYQFWINQSDDDVIKFLKYFTFLDKDEINRLEESKNQEPHLREAQKALAENVTEFIHGKEALDDAIRISKALFSGDLKSLSGKELKEGFKDVPQVELSTETSNIIDVLIETGIATSKRQAREDVNNGAIYINGERQQSVDYELSNEDKIDDEFTIIRRGKKKYFMVNYK.

Tyr-36 contacts L-tyrosine. The 'HIGH' region signature appears at 41 to 50; sequence PTADSLHIGH. Positions 170 and 174 each coordinate L-tyrosine. Positions 231–235 match the 'KMSKS' region motif; sequence KFGKS. Residue Lys-234 participates in ATP binding. An S4 RNA-binding domain is found at 353–420; that stretch reads SNIIDVLIET…KKKYFMVNYK (68 aa).

Belongs to the class-I aminoacyl-tRNA synthetase family. TyrS type 1 subfamily. Homodimer.

It is found in the cytoplasm. The catalysed reaction is tRNA(Tyr) + L-tyrosine + ATP = L-tyrosyl-tRNA(Tyr) + AMP + diphosphate + H(+). Functionally, catalyzes the attachment of tyrosine to tRNA(Tyr) in a two-step reaction: tyrosine is first activated by ATP to form Tyr-AMP and then transferred to the acceptor end of tRNA(Tyr). This Staphylococcus haemolyticus (strain JCSC1435) protein is Tyrosine--tRNA ligase.